Reading from the N-terminus, the 414-residue chain is 2,3-diketo-5-methylthiopentyl-1-phosphate enolase (414 aa).

Residue Lys99 is the Proton acceptor of the active site. Substrate contacts are provided by residues Lys148, 174–177 (KDDE), His265, Gly338, and 360–361 (GG). The Mg(2+) site is built by Lys174, Asp176, and Glu177. Residue Lys174 is modified to N6-carboxylysine.

This sequence belongs to the RuBisCO large chain family. Type IV subfamily. In terms of assembly, homodimer. Mg(2+) is required as a cofactor.

It carries out the reaction 5-methylsulfanyl-2,3-dioxopentyl phosphate = 2-hydroxy-5-methylsulfanyl-3-oxopent-1-enyl phosphate. It participates in amino-acid biosynthesis; L-methionine biosynthesis via salvage pathway; L-methionine from S-methyl-5-thio-alpha-D-ribose 1-phosphate: step 3/6. Catalyzes the enolization of 2,3-diketo-5-methylthiopentyl-1-phosphate (DK-MTP-1-P) into 2-hydroxy-3-keto-5-methylthiopentenyl-1-phosphate (HK-MTPenyl-1-P). This is 2,3-diketo-5-methylthiopentyl-1-phosphate enolase from Bacillus cereus (strain G9842).